We begin with the raw amino-acid sequence, 61 residues long: Small ribosomal subunit protein uS14 (61 aa).

Cysteine 24, cysteine 27, cysteine 40, and cysteine 43 together coordinate Zn(2+).

The protein belongs to the universal ribosomal protein uS14 family. Zinc-binding uS14 subfamily. In terms of assembly, part of the 30S ribosomal subunit. Contacts proteins S3 and S10. Zn(2+) serves as cofactor.

Its function is as follows. Binds 16S rRNA, required for the assembly of 30S particles and may also be responsible for determining the conformation of the 16S rRNA at the A site. The polypeptide is Small ribosomal subunit protein uS14 (Lachnospira eligens (strain ATCC 27750 / DSM 3376 / VPI C15-48 / C15-B4) (Eubacterium eligens)).